The sequence spans 327 residues: MSNPDVDLDSIIDRLLEVRGSRPGRQVQLSEDEIRFLCNKAREIFISQPILLELEAPLKICGDIHGQYYDLLRLFEYGGFPPEANYLFLGDYVDRGKQSLEVICLLLAYKIKYPENFFILRGNHECASINRIYGFYDECKRRYNIKLWKTFTDCFNCLPIAAIIDEKIFTMHGGLSPDLNSMDQIQRIMRPTDVPDTGLLCDLLWSDPDKDLTGWGDNDRGVSFTFGPDVVSRFLHKHDMDLVCRAHQVVEDGYEFFSKRQLVTLFSAPNYCGEFDNAGAMMSVDESLLCSFQILKPAEKKQRYGYQGSSQNWHMTPPRKNKTGNSK.

4 residues coordinate Mn(2+): Asp63, His65, Asp91, and Asn123. The Proton donor role is filled by His124. 2 residues coordinate Mn(2+): His172 and His247. The interval 305–327 is disordered; the sequence is GYQGSSQNWHMTPPRKNKTGNSK. Thr316 carries the post-translational modification Phosphothreonine; by CDC2. The segment covering 317–327 has biased composition (basic residues); sequence PPRKNKTGNSK.

It belongs to the PPP phosphatase family. PP-1 subfamily. Oligomer. Mn(2+) serves as cofactor.

Its subcellular location is the nucleus. The catalysed reaction is O-phospho-L-seryl-[protein] + H2O = L-seryl-[protein] + phosphate. It catalyses the reaction O-phospho-L-threonyl-[protein] + H2O = L-threonyl-[protein] + phosphate. Essential role in cell cycle control. PP1 is perhaps required for exit from mitosis. In Schizosaccharomyces pombe (strain 972 / ATCC 24843) (Fission yeast), this protein is Serine/threonine-protein phosphatase PP1-1 (dis2).